A 286-amino-acid polypeptide reads, in one-letter code: 1D-myo-inositol 2-acetamido-2-deoxy-alpha-D-glucopyranoside deacetylase (286 aa).

3 residues coordinate Zn(2+): His12, Asp15, and His147.

This sequence belongs to the MshB deacetylase family. Zn(2+) serves as cofactor.

It catalyses the reaction 1D-myo-inositol 2-acetamido-2-deoxy-alpha-D-glucopyranoside + H2O = 1D-myo-inositol 2-amino-2-deoxy-alpha-D-glucopyranoside + acetate. Functionally, catalyzes the deacetylation of 1D-myo-inositol 2-acetamido-2-deoxy-alpha-D-glucopyranoside (GlcNAc-Ins) in the mycothiol biosynthesis pathway. The polypeptide is 1D-myo-inositol 2-acetamido-2-deoxy-alpha-D-glucopyranoside deacetylase (Thermobifida fusca (strain YX)).